Consider the following 496-residue polypeptide: NADP-dependent glyceraldehyde-3-phosphate dehydrogenase (496 aa).

Substrate contacts are provided by residues R116 and 169–170 (NY). Positions 192, 195, and 230 each coordinate NADP(+). 245–249 (GGDTG) contacts NAD(+). E264 functions as the Proton acceptor in the catalytic mechanism. Residue 297–299 (RCT) coordinates substrate. Residue C298 is the Nucleophile of the active site. Residue E391 coordinates NADP(+). S404 is subject to Phosphoserine. R451 lines the substrate pocket.

Belongs to the aldehyde dehydrogenase family. As to quaternary structure, interacts with 14-3-3 protein when phosphorylated. This interaction is released by divalent cations. Post-translationally, phosphorylated in shoots and non-photosynthetic tissues, but not in leaves.

Its subcellular location is the cytoplasm. It catalyses the reaction D-glyceraldehyde 3-phosphate + NADP(+) + H2O = (2R)-3-phosphoglycerate + NADPH + 2 H(+). Insensitive to magnesium or calcium when dephosphorylated. When phosphorylated, 3-fold activation by magnesium or calcium, 2-fold activation by potassium, inhibited by ADP and AMP and insensitive to ATP or PPi. Its function is as follows. Important as a means of generating NADPH for biosynthetic reactions. In Triticum aestivum (Wheat), this protein is NADP-dependent glyceraldehyde-3-phosphate dehydrogenase (GAPN).